The following is a 221-amino-acid chain: Small ribosomal subunit protein uS3 (221 aa).

Positions 39–108 (IRKFVKKELF…NVLINIVEVK (70 aa)) constitute a KH type-2 domain.

It belongs to the universal ribosomal protein uS3 family. In terms of assembly, part of the 30S ribosomal subunit. Forms a tight complex with proteins S10 and S14.

In terms of biological role, binds the lower part of the 30S subunit head. Binds mRNA in the 70S ribosome, positioning it for translation. The polypeptide is Small ribosomal subunit protein uS3 (Clostridium beijerinckii (strain ATCC 51743 / NCIMB 8052) (Clostridium acetobutylicum)).